Here is a 188-residue protein sequence, read N- to C-terminus: MGTIADDILGDLHGRILKTLDQLRTDLSAVRTGRASLHLLDNVRVDYYGTPTPLNQVATMSVPEARLIVVKPWEKSMIPPIEKAIREANLGLNPMSDKDLVRVPIPALTEERRKEIVKQVKHKGEEHKIAVRNVRREAKELIEVAEKDGDISGDDAEKALEKMQKETDDGVKKIDEIVAAKEKDVLQV.

It belongs to the RRF family.

It is found in the cytoplasm. Its function is as follows. Responsible for the release of ribosomes from messenger RNA at the termination of protein biosynthesis. May increase the efficiency of translation by recycling ribosomes from one round of translation to another. This chain is Ribosome-recycling factor, found in Anaeromyxobacter dehalogenans (strain 2CP-C).